The sequence spans 218 residues: 7-cyano-7-deazaguanine synthase 1 (218 aa).

Residue 9-19 (YSGGMDSFTVL) participates in ATP binding. Zn(2+) is bound by residues Cys-185, Cys-193, Cys-196, and Cys-199.

The protein belongs to the QueC family. Zn(2+) is required as a cofactor.

It carries out the reaction 7-carboxy-7-deazaguanine + NH4(+) + ATP = 7-cyano-7-deazaguanine + ADP + phosphate + H2O + H(+). Its pathway is purine metabolism; 7-cyano-7-deazaguanine biosynthesis. Its function is as follows. Catalyzes the ATP-dependent conversion of 7-carboxy-7-deazaguanine (CDG) to 7-cyano-7-deazaguanine (preQ(0)). The protein is 7-cyano-7-deazaguanine synthase 1 of Colwellia psychrerythraea (strain 34H / ATCC BAA-681) (Vibrio psychroerythus).